A 350-amino-acid polypeptide reads, in one-letter code: C-X-C chemokine receptor type 1 (350 aa).

The Extracellular portion of the chain corresponds to 1-39 (MSNITDPQMWDFDDLNFTGMPPTDEGYSPCRLETETLNK). 2 N-linked (GlcNAc...) asparagine glycosylation sites follow: Asn-3 and Asn-16. The helical transmembrane segment at 40 to 66 (YVVIITYALVFLLSLLGNSLVMLVILY) threads the bilayer. Topologically, residues 67–75 (SRVGRSVTD) are cytoplasmic. The chain crosses the membrane as a helical span at residues 76-96 (VYLLNLALADLLFALTLPIWA). Topologically, residues 97–111 (ASKVNGWIFGTFLCK) are extracellular. A disulfide bridge connects residues Cys-110 and Cys-187. A helical transmembrane segment spans residues 112–133 (VVSLLKEVNFYSGILLLACISV). The Cytoplasmic segment spans residues 134 to 154 (DRYLAIVHATRTLTQKRHLVK). Residues 155–174 (FVCLGCWGLSMNLSLPFFLF) form a helical membrane-spanning segment. Residues 175–199 (RQAYHPNNSSPVCYEVLGNDTAKWR) are Extracellular-facing. Residues 200 to 220 (MVLRILPHTFGFIVPLFVMLF) traverse the membrane as a helical segment. Topologically, residues 221-242 (CYGFTLRTLFKAHMGQKHRAMR) are cytoplasmic. Residues 243-264 (VIFAVVLIFLLCWLPYNLVLLA) traverse the membrane as a helical segment. Residues 265-285 (DTLMRTQVIQESCERRNNIGR) are Extracellular-facing. The chain crosses the membrane as a helical span at residues 286-308 (ALDATEILGFLHSCLNPIIYAFI). Residues 309–350 (GQNFRHGFLKILAMHGLVSKEFLARHRVTSYTSSSVNVSSNL) lie on the Cytoplasmic side of the membrane.

The protein belongs to the G-protein coupled receptor 1 family. As to quaternary structure, interacts with IL8. Interacts with GNAI2.

Its subcellular location is the cell membrane. Receptor to interleukin-8, which is a powerful neutrophils chemotactic factor. Binding of IL-8 to the receptor causes activation of neutrophils. This response is mediated via a G-protein that activates a phosphatidylinositol-calcium second messenger system. This Pan troglodytes (Chimpanzee) protein is C-X-C chemokine receptor type 1 (CXCR1).